The following is a 641-amino-acid chain: WW domain-binding protein 11 (641 aa).

Residues 1–11 (MGRRSTSSTKS) show a composition bias toward polar residues. Residues 1–37 (MGRRSTSSTKSGKFMNPTDQARKEARKRELKKNKKQR) are disordered. The required for nuclear import stretch occupies residues 1 to 45 (MGRRSTSSTKSGKFMNPTDQARKEARKRELKKNKKQRMMVRAAVL). The residue at position 13 (K13) is an N6-acetyllysine. Basic residues predominate over residues 28-37 (RELKKNKKQR). Residues 75–133 (EKVLKDKRKKLRETFERILRLYEKENPDIYKELRKLEVEYEQKRAQLSQYFDAVKNAQH) are a coiled coil. S181 is subject to Phosphoserine. The tract at residues 186-213 (LGHGVPRLPPGRKPPGPPPGPPPPQVVQ) is disordered. R192 bears the Omega-N-methylarginine mark. Residues 192-210 (RLPPGRKPPGPPPGPPPPQ) are compositionally biased toward pro residues. The segment at 217-221 (RKVGF) is interaction with PP1. The residue at position 236 (Y236) is a Phosphotyrosine. The interval 236 to 552 (YSPELAQRGH…RPKADDTSAA (317 aa)) is disordered. A Phosphoserine modification is found at S237. Residues 253–263 (SEDDGYPEDMD) show a composition bias toward acidic residues. The span at 276–304 (TDKSDGESDGDEFVHRDNGERDNNEEKKS) shows a compositional bias: basic and acidic residues. Phosphoserine is present on residues S279 and S283. The tract at residues 306 to 310 (LSVRF) is interaction with PP1. Residues 351–365 (EFSEDDDEDDSDDSE) are compositionally biased toward acidic residues. A phosphoserine mark is found at S353, S361, and S364. Positions 366–380 (AEKQSQKQHKEESHS) are enriched in basic and acidic residues. The segment covering 386-404 (ASSQQQAPPQSVPPSQIQA) has biased composition (low complexity). Pro residues-rich tracts occupy residues 405 to 447 (PPMP…PPGM), 456 to 504 (RLLP…PPRP), and 510 to 530 (PLVP…PLPN). Residues 455–466 (PRLLPPGPPPGR) carry the PGR motif. A Glycyl lysine isopeptide (Lys-Gly) (interchain with G-Cter in SUMO2) cross-link involves residue K557. N6-acetyllysine is present on K565. A Glycyl lysine isopeptide (Lys-Gly) (interchain with G-Cter in SUMO2) cross-link involves residue K572. The tract at residues 587 to 623 (RENKGATAAPQRKSEDDSAVPLAKAAPKSGPSVPVSV) is disordered. The residue at position 600 (S600) is a Phosphoserine.

In terms of assembly, interacts with PPP1CA, PPP1CB and PPP1CC. Interacts via the PGR motif with PQBP1 in the nucleus. Interacts with the WW domains of WBP4. Ubiquitous. Highly expressed in the heart, pancreas, kidney skeletal muscle, placenta and brain (at protein level). Weakly expressed in liver and lung.

Its subcellular location is the nucleus. It localises to the cytoplasm. Its function is as follows. Activates pre-mRNA splicing. May inhibit PP1 phosphatase activity. This Homo sapiens (Human) protein is WW domain-binding protein 11.